The primary structure comprises 707 residues: Alpha-hemolysin translocation ATP-binding protein HlyB (707 aa).

A Peptidase C39 domain is found at 3 to 125 (SCHKIDYGLY…ALYQGHIILI (123 aa)). His-83 is a catalytic residue. The 283-residue stretch at 154–436 (FIETLVVSVF…LAQIWQDFQQ (283 aa)) folds into the ABC transmembrane type-1 domain. The next 5 membrane-spanning stretches (helical) occupy residues 158–178 (LVVSVFLQLFALITPLFFQVV), 191–211 (LNVITVALSVVVVFEIILSGL), 269–289 (ALTSVLDLLFSLIFFAVMWYY), 295–315 (LVILFSLPCYAAWSVFISPIL), and 388–408 (VMIINLWLGAHLVISGDLSIG). The ABC transporter domain maps to 468 to 703 (ITFRNIRFRY…PESLYSYLYQ (236 aa)). 502-509 (GRSGSGKS) is a binding site for ATP.

The protein belongs to the ABC transporter superfamily. Protein-1 exporter (TC 3.A.1.109) family. Homodimer.

It is found in the cell inner membrane. In terms of biological role, part of the ABC transporter complex HlyBD involved in hemolysin export. Transmembrane domains (TMD) form a pore in the inner membrane and the ATP-binding domain (NBD) is responsible for energy generation. The protein is Alpha-hemolysin translocation ATP-binding protein HlyB (hlyB) of Escherichia coli.